A 442-amino-acid chain; its full sequence is MREIVHIQGGQCGNQIGAKFWEVISDEHGIDPTGTYHGDSDLQLERINVYYNEATGGRYVPRAVLMDLEPGTMDSVRAGPFGQLFRPDNFVFGQSGAGNNWAKGHYTEGAELIDSVLDVVRKEAEGCDCLQGFQITHSLGGGTGSGMGTLLISKVREEYPDRIMATFSVVPSPKVSDTVVEPYNATLSVHQLVENADEVMCIDNEALYDICFRTLKLTTPTYGDLNHLVSAGISGVTCCLRFPGQLNSDLRKLAVNLIPFPRLHFFMTGFAPLTSRGSQQYRALTVPELTQQMFDAKNMMCASDPRHGRYLTASALFRGRMSTKEVDEQMLNVQNKNSSYFVEWIPNNIKSSVCDIPPKGLKMAVTFLGNSTAIQEMFKRVGEQFTAMFRRKAFLHWYTGEGMDEMEFTEAESNMNDLVSEYQQYQDATAEDEEEMDEEQME.

Positions 11, 69, 138, 142, 143, 144, 204, and 226 each coordinate GTP. E69 serves as a coordination point for Mg(2+). Residues 421-442 (EYQQYQDATAEDEEEMDEEQME) are disordered. Acidic residues predominate over residues 429–442 (TAEDEEEMDEEQME).

Belongs to the tubulin family. In terms of assembly, dimer of alpha and beta chains. A typical microtubule is a hollow water-filled tube with an outer diameter of 25 nm and an inner diameter of 15 nM. Alpha-beta heterodimers associate head-to-tail to form protofilaments running lengthwise along the microtubule wall with the beta-tubulin subunit facing the microtubule plus end conferring a structural polarity. Microtubules usually have 13 protofilaments but different protofilament numbers can be found in some organisms and specialized cells. Mg(2+) serves as cofactor.

The protein localises to the cytoplasm. The protein resides in the cytoskeleton. Functionally, tubulin is the major constituent of microtubules, a cylinder consisting of laterally associated linear protofilaments composed of alpha- and beta-tubulin heterodimers. Microtubules grow by the addition of GTP-tubulin dimers to the microtubule end, where a stabilizing cap forms. Below the cap, tubulin dimers are in GDP-bound state, owing to GTPase activity of alpha-tubulin. The chain is Tubulin beta chain (TUBB1) from Stylonychia lemnae (Ciliate).